The chain runs to 317 residues: D-alanine--D-alanine ligase (317 aa).

The ATP-grasp domain maps to 104–303; it reads KRVWLQHGLP…YAELCVAILA (200 aa). Position 130 to 185 (130 to 185) interacts with ATP; the sequence is PDRLGLPLILKPPHEGSTVGITKVAACADMEQAYAAASHFDEVVLAEQFVRGRELT. Mg(2+) contacts are provided by Asp-257, Glu-270, and Asn-272.

It belongs to the D-alanine--D-alanine ligase family. It depends on Mg(2+) as a cofactor. Mn(2+) is required as a cofactor.

Its subcellular location is the cytoplasm. It catalyses the reaction 2 D-alanine + ATP = D-alanyl-D-alanine + ADP + phosphate + H(+). It participates in cell wall biogenesis; peptidoglycan biosynthesis. Functionally, cell wall formation. The protein is D-alanine--D-alanine ligase of Bordetella avium (strain 197N).